The sequence spans 223 residues: Ribose-5-phosphate isomerase A (223 aa).

Substrate is bound by residues 29 to 32 (TGST), 82 to 85 (DGAD), and 95 to 98 (KGGG). The active-site Proton acceptor is the glutamate 104. Lysine 122 is a substrate binding site.

This sequence belongs to the ribose 5-phosphate isomerase family. In terms of assembly, homodimer.

The catalysed reaction is aldehydo-D-ribose 5-phosphate = D-ribulose 5-phosphate. Its pathway is carbohydrate degradation; pentose phosphate pathway; D-ribose 5-phosphate from D-ribulose 5-phosphate (non-oxidative stage): step 1/1. In terms of biological role, catalyzes the reversible conversion of ribose-5-phosphate to ribulose 5-phosphate. In Neisseria meningitidis serogroup B (strain ATCC BAA-335 / MC58), this protein is Ribose-5-phosphate isomerase A.